The following is a 122-amino-acid chain: Large ribosomal subunit protein uL18 (122 aa).

Belongs to the universal ribosomal protein uL18 family. Part of the 50S ribosomal subunit; part of the 5S rRNA/L5/L18/L25 subcomplex. Contacts the 5S and 23S rRNAs.

Its function is as follows. This is one of the proteins that bind and probably mediate the attachment of the 5S RNA into the large ribosomal subunit, where it forms part of the central protuberance. This Prochlorococcus marinus (strain MIT 9215) protein is Large ribosomal subunit protein uL18.